The sequence spans 101 residues: Small ribosomal subunit protein uS14 (101 aa).

The disordered stretch occupies residues 51–70; it reads LPRDSSPSRQRNRCRQTGRP.

The protein belongs to the universal ribosomal protein uS14 family. Part of the 30S ribosomal subunit. Contacts proteins S3 and S10.

Functionally, binds 16S rRNA, required for the assembly of 30S particles and may also be responsible for determining the conformation of the 16S rRNA at the A site. The protein is Small ribosomal subunit protein uS14 of Salmonella arizonae (strain ATCC BAA-731 / CDC346-86 / RSK2980).